Consider the following 20-residue polypeptide: Putative serine protease (20 aa).

This sequence belongs to the peptidase S1 family.

It localises to the secreted. Its function is as follows. Binds the A.niger cell wall component alpha-1,3-glucan, a fungal pathogen-associated molecular pattern (PAMP) that activates the host immune response. The polypeptide is Putative serine protease (Galleria mellonella (Greater wax moth)).